We begin with the raw amino-acid sequence, 277 residues long: 4-hydroxy-tetrahydrodipicolinate reductase (277 aa).

Residues 10-15 (GAGGRM) and glutamate 36 contribute to the NAD(+) site. Residue arginine 37 participates in NADP(+) binding. NAD(+) is bound by residues 100 to 102 (GTT) and 124 to 127 (SGNM). Histidine 158 functions as the Proton donor/acceptor in the catalytic mechanism. Histidine 159 is a (S)-2,3,4,5-tetrahydrodipicolinate binding site. Lysine 162 functions as the Proton donor in the catalytic mechanism. 168-169 (GT) lines the (S)-2,3,4,5-tetrahydrodipicolinate pocket.

It belongs to the DapB family.

It is found in the cytoplasm. It carries out the reaction (S)-2,3,4,5-tetrahydrodipicolinate + NAD(+) + H2O = (2S,4S)-4-hydroxy-2,3,4,5-tetrahydrodipicolinate + NADH + H(+). The catalysed reaction is (S)-2,3,4,5-tetrahydrodipicolinate + NADP(+) + H2O = (2S,4S)-4-hydroxy-2,3,4,5-tetrahydrodipicolinate + NADPH + H(+). It functions in the pathway amino-acid biosynthesis; L-lysine biosynthesis via DAP pathway; (S)-tetrahydrodipicolinate from L-aspartate: step 4/4. Catalyzes the conversion of 4-hydroxy-tetrahydrodipicolinate (HTPA) to tetrahydrodipicolinate. This Chelativorans sp. (strain BNC1) protein is 4-hydroxy-tetrahydrodipicolinate reductase.